The primary structure comprises 65 residues: Metallothionein-3 (65 aa).

The residue at position 1 (Met1) is an N-acetylmethionine. The interval 1-30 (MDPEACPCPTGGSCTCSDSCKCEGCTCASS) is beta. Cys6, Cys8, Cys14, Cys16, Cys20, Cys22, Cys25, and Cys27 together coordinate a divalent metal cation. The segment at 31–65 (KKSCCPAECEKCAKDCVCKGGEGAEAEEKKCGCCQ) is alpha. A Phosphoserine modification is found at Ser33. A divalent metal cation contacts are provided by Cys34, Cys35, Cys39, Cys42, Cys46, Cys48, Cys61, Cys63, and Cys64.

Belongs to the metallothionein superfamily. Type 1 family.

In terms of biological role, binds heavy metals. Contains five zinc and one copper atoms per polypeptide chain and only a negligible amount of cadmium. The chain is Metallothionein-3 (MT3) from Ovis aries (Sheep).